The primary structure comprises 147 residues: Putative pre-16S rRNA nuclease (147 aa).

The protein belongs to the YqgF nuclease family.

The protein localises to the cytoplasm. Could be a nuclease involved in processing of the 5'-end of pre-16S rRNA. The protein is Putative pre-16S rRNA nuclease of Polynucleobacter necessarius subsp. necessarius (strain STIR1).